The chain runs to 1849 residues: Brefeldin A-inhibited guanine nucleotide-exchange protein 1 (1849 aa).

Residues 2 to 224 are DCB; DCB:DCB domain and DCB:HUS domain interaction; that stretch reads YEGKKTKNMF…QEAKQMEKER (223 aa). Residues 46-58 show a composition bias toward basic and acidic residues; sequence AETEKQSPPHGEA. 4 disordered regions span residues 46–65, 216–248, 267–302, and 378–413; these read AETE…SSTL, EAKQ…QLRY, LHTN…DQAT, and TPIS…SPGA. S52 bears the Phosphoserine mark. Over residues 267-277 the composition is skewed to basic and acidic residues; it reads LHTNDVDKSLQ. S286, S289, S290, S397, and S410 each carry phosphoserine. A compositionally biased stretch (polar residues) spans 394-409; it reads SVSSNDTQESGNSSGP. Positions 557 to 577 are HUS; DCB:HUS domain interaction; the sequence is ADAQSVVDIYVNYDCDLNAAN. The region spanning 709-840 is the SEC7 domain; that stretch reads FNKKPKRGIQ…IIMLTTDLHS (132 aa). The Nuclear localization signal (NLS) motif lies at 711–715; that stretch reads KKPKR. Position 1079 is a phosphoserine (S1079). The segment at 1543–1562 is disordered; it reads RPNSGETAPPPPSPVSEKPL. Phosphoserine is present on residues S1566 and S1569.

As to quaternary structure, homodimer. Interacts with ARFGEF2/BIG2; both proteins are probably part of the same or very similar macromolecular complexes. Interacts with FKBP2. Interacts with MYO9B. Interacts with PRKAR1A and PRKAR2A. Interacts with PPP1CC. Interacts with NCL, FBL, NUP62 and U3 small nucleolar RNA. Interacts with DPY30. Interacts with PDE3A. Interacts with KANK1. Interacts with TBC1D22A and TBC1D22B. Interacts (via N-terminus) with ARL1. Phosphorylated. In vitro phosphorylated by PKA reducing its GEF activity and dephosphorylated by phosphatase PP1. In terms of tissue distribution, expressed in placenta, lung, heart, brain, kidney and pancreas.

It is found in the cytoplasm. The protein resides in the perinuclear region. The protein localises to the golgi apparatus. Its subcellular location is the trans-Golgi network membrane. It localises to the nucleus. It is found in the nucleolus. The protein resides in the nucleus matrix. Its activity is regulated as follows. Inhibited by brefeldin A. In terms of biological role, promotes guanine-nucleotide exchange on ARF1 and ARF3. Promotes the activation of ARF1/ARF3 through replacement of GDP with GTP. Involved in vesicular trafficking. Required for the maintenance of Golgi structure; the function may be independent of its GEF activity. Required for the maturation of integrin beta-1 in the Golgi. Involved in the establishment and persistence of cell polarity during directed cell movement in wound healing. Proposed to act as A kinase-anchoring protein (AKAP) and may mediate crosstalk between Arf and PKA pathways. Inhibits GAP activity of MYO9B probably through competitive RhoA binding. The function in the nucleus remains to be determined. In Homo sapiens (Human), this protein is Brefeldin A-inhibited guanine nucleotide-exchange protein 1 (ARFGEF1).